We begin with the raw amino-acid sequence, 735 residues long: Catalase-peroxidase (735 aa).

Residues 97–220 (WHAAGTYRIG…LAAVQMGLIY (124 aa)) constitute a cross-link (tryptophyl-tyrosyl-methioninium (Trp-Tyr) (with M-246)). The active-site Proton acceptor is the His98. The tryptophyl-tyrosyl-methioninium (Tyr-Met) (with W-97) cross-link spans 220 to 246 (YVNPEGPNGKPDPMAAAHDIRETFGRM). His261 lines the heme b pocket. The tract at residues 342–362 (AHQWTPKNPEAASTVPDAHDP) is disordered.

The protein belongs to the peroxidase family. Peroxidase/catalase subfamily. In terms of assembly, homodimer or homotetramer. Heme b is required as a cofactor. In terms of processing, formation of the three residue Trp-Tyr-Met cross-link is important for the catalase, but not the peroxidase activity of the enzyme.

The catalysed reaction is H2O2 + AH2 = A + 2 H2O. The enzyme catalyses 2 H2O2 = O2 + 2 H2O. Functionally, bifunctional enzyme with both catalase and broad-spectrum peroxidase activity. The chain is Catalase-peroxidase from Gloeobacter violaceus (strain ATCC 29082 / PCC 7421).